A 471-amino-acid polypeptide reads, in one-letter code: DnaJ protein P58IPK homolog B (471 aa).

The signal sequence occupies residues 1–24 (MARWPWRWRVLLPLLLLHSSPVFA). TPR repeat units lie at residues 32 to 65 (PSTLFKRASEMMNLRKYDGSLGLLNAVLEVDPNH), 66 to 99 (SEAYRQRASVLRHKCRYKEAEGDYSKYLELKPGS), 112 to 146 (AQNALESAYGQFESHDFSKVLEYINKIVLVFSPNC), 148 to 180 (KAKLLKAKALLALEDYSSVISETGFILKEDEDN), 181 to 214 (LDALLLRGRAYYYLADHDVASRHYQKGLRLDPEH), 227 to 260 (LLKKTKSAEDNAAKGKLRVSAEDYKAALAMDPDH), 265 to 298 (VHLYLGLCKVLVKLGRGKEAISSCTEALNIDGEL), and 300 to 332 (DALTQRGEAKLLTEDWEGAVQDLKEASQKSPQD). Asparagine 64 carries N-linked (GlcNAc...) asparagine glycosylation. In terms of domain architecture, J spans 353-419 (DWYKILGISK…DKRVRYDRGE (67 aa)).

Interacts with BIP1.

It is found in the endoplasmic reticulum lumen. May play a role in protein folding in the endoplasmic reticulum. The protein is DnaJ protein P58IPK homolog B of Oryza sativa subsp. japonica (Rice).